The chain runs to 177 residues: Large ribosomal subunit protein uL6 (177 aa).

The protein belongs to the universal ribosomal protein uL6 family. Part of the 50S ribosomal subunit.

In terms of biological role, this protein binds to the 23S rRNA, and is important in its secondary structure. It is located near the subunit interface in the base of the L7/L12 stalk, and near the tRNA binding site of the peptidyltransferase center. In Cellvibrio japonicus (strain Ueda107) (Pseudomonas fluorescens subsp. cellulosa), this protein is Large ribosomal subunit protein uL6.